The sequence spans 248 residues: tRNA uridine(34) hydroxylase (248 aa).

The 95-residue stretch at 128 to 222 folds into the Rhodanese domain; sequence EGRPVVMLDT…YFEEVGGAHY (95 aa). Cys-182 serves as the catalytic Cysteine persulfide intermediate.

The protein belongs to the TrhO family.

The catalysed reaction is uridine(34) in tRNA + AH2 + O2 = 5-hydroxyuridine(34) in tRNA + A + H2O. Functionally, catalyzes oxygen-dependent 5-hydroxyuridine (ho5U) modification at position 34 in tRNAs. The polypeptide is tRNA uridine(34) hydroxylase (Thiobacillus denitrificans (strain ATCC 25259 / T1)).